The primary structure comprises 640 residues: Zinc finger protein 549 (640 aa).

Residues 27–140 (VTFEDIAVYF…PYTSVASGKW (114 aa)) enclose the KRAB domain. The C2H2-type 1; degenerate zinc-finger motif lies at 217–241 (FQQRRYKCEQVFNEKVHVTEHQRVH). Lys-223 is covalently cross-linked (Glycyl lysine isopeptide (Lys-Gly) (interchain with G-Cter in SUMO2)). The segment at 247–269 (YKRREYGKSLNSKYLFVEHQRTH) adopts a C2H2-type 2; degenerate zinc-finger fold. 13 C2H2-type zinc fingers span residues 275-298 (YVCN…QRIH), 304-326 (YVCI…QRTH), 332-355 (YVCN…QRIH), 361-383 (YVCM…QRVH), 389-411 (YQCS…HRIH), 417-439 (YECK…QRIH), 445-467 (YVCI…QRIH), 473-495 (YECS…HKIH), 501-523 (YECS…QRIH), 529-551 (CECN…QKVH), 557-579 (CECS…QKVH), 585-607 (YNCT…QRIH), and 613-635 (YECG…QKVH).

This sequence belongs to the krueppel C2H2-type zinc-finger protein family.

It is found in the nucleus. Functionally, may be involved in transcriptional regulation. In Homo sapiens (Human), this protein is Zinc finger protein 549 (ZNF549).